The primary structure comprises 100 residues: Coiled-coil domain-containing protein 167 (100 aa).

The stretch at 14–81 (VASEIDRVEE…VLRGENRRNM (68 aa)) forms a coiled coil. Residues 82–99 (MLSVALLAISALFYYTFI) traverse the membrane as a helical segment.

It localises to the membrane. The polypeptide is Coiled-coil domain-containing protein 167 (ccdc167) (Danio rerio (Zebrafish)).